A 721-amino-acid polypeptide reads, in one-letter code: DNA ligase (721 aa).

NAD(+) is bound by residues 39 to 43 (DAEYD), 89 to 90 (SL), and E123. K125 functions as the N6-AMP-lysine intermediate in the catalytic mechanism. The NAD(+) site is built by R146, E186, K302, and K326. The Zn(2+) site is built by C418, C421, C436, and C442. The disordered stretch occupies residues 556–588 (QASSAAREGEPANADGAYDPATVTPDSDTAGAE). In terms of domain architecture, BRCT spans 641-721 (TKDSAVAGKT…AWAEIVRQAG (81 aa)).

The protein belongs to the NAD-dependent DNA ligase family. LigA subfamily. It depends on Mg(2+) as a cofactor. Mn(2+) is required as a cofactor.

It catalyses the reaction NAD(+) + (deoxyribonucleotide)n-3'-hydroxyl + 5'-phospho-(deoxyribonucleotide)m = (deoxyribonucleotide)n+m + AMP + beta-nicotinamide D-nucleotide.. Its function is as follows. DNA ligase that catalyzes the formation of phosphodiester linkages between 5'-phosphoryl and 3'-hydroxyl groups in double-stranded DNA using NAD as a coenzyme and as the energy source for the reaction. It is essential for DNA replication and repair of damaged DNA. In Novosphingobium aromaticivorans (strain ATCC 700278 / DSM 12444 / CCUG 56034 / CIP 105152 / NBRC 16084 / F199), this protein is DNA ligase.